A 743-amino-acid polypeptide reads, in one-letter code: Putative metallophosphoesterase At3g03305 (743 aa).

Residues 1-40 (MESIGDDDELRSKTVSLPRRISFTILLLLLLISLSTRVSG) form the signal peptide. A divalent metal cation is bound by residues Asp-66, His-68, and Asp-101. 5 consecutive transmembrane segments (helical) span residues 514 to 534 (ILWP…CIII), 565 to 585 (MPVV…FPWF), 623 to 643 (VMVV…LVVC), 687 to 704 (LFRK…WKHF), and 716 to 736 (MNVV…LYVI).

The protein belongs to the metallophosphoesterase superfamily. Requires a divalent metal cation as cofactor.

The protein localises to the membrane. The protein is Putative metallophosphoesterase At3g03305 of Arabidopsis thaliana (Mouse-ear cress).